A 726-amino-acid polypeptide reads, in one-letter code: MAEYLRLPHSLALIRLRNPPVNAISPAVIHGIKEGLQKAMSDYTIKGIVISGANNIFCAGADIHGFSAPLSFGTGSGLGPIVDEMQRYEKPVVAAIQGMALGGGLELSLGCHYRIAHAEARIGFPEVTLGILPGARGTQLLPRLIGVPAALDLITSGRHITAGEALKLGILDKVVNSAPVEEAIKFAQKILNQPLEPRRILNRPVSSLPNMDAIFGEAVEKMRRQHPGQLAPETCVRSVQASVQYPYEGGIMKERELFLNLQHSGQAKALQYAFFAERSAPKWSTPSGASWKTAAARPVSSVGVLGLGTMGRGIAISFARVGIPVIAVESDPKQLETAQKLITSILEKEASKSRQQCGQQRSGPKPRFSSSMKDLASVDLVVEAVFEDMNLKKRVFAELSAVCKPEAFLCTNTSALDVDEIATSTNRPQQVIGTHFFSPAHVMKLLEVIPSRHSSPTTIATVMDLAKKIKKVAVVVGNCYGFVGNRMLRSYYEQTNFLLEDGSKPEDIDQALEEFGFRMGPFRVSDLAGLDVGWKIRKGQGLTGPSLQGTAPARKRGNARYSPIADMLCELGRFGQKTGQGWYKYDKPLGRIHKPDPWLSKFLSEYRETHHIKPRVIGRDEILERCLYALINEAFRILGEGIAASPEHIDVIYLHGYGWPRHKGGPMFYAASVGLPTVLEKLQKYYQQNPDIPHLEPCNYLKKLASQGNPPLKEWQSLAGLPSSKL.

The segment at 1–284 (MAEYLRLPHS…FAERSAPKWS (284 aa)) is enoyl-CoA hydratase / isomerase. An N6-succinyllysine modification is found at Lys38. Gly103 is a substrate binding site. An N6-acetyllysine; alternate modification is found at Lys167. N6-succinyllysine; alternate is present on Lys167. Lys173 carries the post-translational modification N6-acetyllysine. Lys185 carries the N6-succinyllysine modification. Lys221 bears the N6-acetyllysine; alternate mark. At Lys221 the chain carries N6-succinyllysine; alternate. N6-succinyllysine occurs at positions 282, 292, and 333. The tract at residues 285-575 (TPSGASWKTA…DMLCELGRFG (291 aa)) is 3-hydroxyacyl-CoA dehydrogenase. 2 positions are modified to N6-acetyllysine: Lys348 and Lys352. A disordered region spans residues 352 to 371 (KSRQQCGQQRSGPKPRFSSS). Positions 353–371 (SRQQCGQQRSGPKPRFSSS) are enriched in polar residues. Lys467 bears the N6-acetyllysine mark. An N6-succinyllysine modification is found at Lys535. N6-acetyllysine; alternate occurs at positions 587, 594, and 713. An N6-succinyllysine; alternate mark is found at Lys587, Lys594, and Lys713. Residues 724–726 (SKL) carry the Microbody targeting signal motif. At Lys725 the chain carries N6-succinyllysine.

In the N-terminal section; belongs to the enoyl-CoA hydratase/isomerase family. This sequence in the C-terminal section; belongs to the 3-hydroxyacyl-CoA dehydrogenase family. In terms of assembly, monomer. Post-translationally, acetylated, leading to enhanced enzyme activity. Acetylation is enhanced by up to 80% after treatment either with trichostin A (TSA) or with nicotinamide (NAM) with highest increase on Lys-348. Acetylation and enzyme activity increased by about 1.5% on addition of fatty acids.

It localises to the peroxisome. It carries out the reaction a (3S)-3-hydroxyacyl-CoA = a (2E)-enoyl-CoA + H2O. The catalysed reaction is a 4-saturated-(3S)-3-hydroxyacyl-CoA = a (3E)-enoyl-CoA + H2O. It catalyses the reaction a (3Z)-enoyl-CoA = a 4-saturated (2E)-enoyl-CoA. The enzyme catalyses a (3E)-enoyl-CoA = a 4-saturated (2E)-enoyl-CoA. It carries out the reaction a (3S)-3-hydroxyacyl-CoA + NAD(+) = a 3-oxoacyl-CoA + NADH + H(+). The catalysed reaction is (2S,3S)-3-hydroxy-2-methylbutanoyl-CoA = (2E)-2-methylbut-2-enoyl-CoA + H2O. It catalyses the reaction (3S)-hydroxyhexadecanoyl-CoA + NAD(+) = 3-oxohexadecanoyl-CoA + NADH + H(+). The enzyme catalyses (3S)-hydroxyhexadecanoyl-CoA = (2E)-hexadecenoyl-CoA + H2O. It carries out the reaction (2E)-hexadecenedioyl-CoA + H2O = (3S)-hydroxyhexadecanedioyl-CoA. The catalysed reaction is (3S)-hydroxyhexadecanedioyl-CoA + NAD(+) = 3-oxohexadecanedioyl-CoA + NADH + H(+). It catalyses the reaction (3E,5Z)-tetradecadienoyl-CoA = (2E,5Z)-tetradecadienoyl-CoA. The enzyme catalyses (3E,5Z)-octadienoyl-CoA = (2E,5Z)-octadienoyl-CoA. It carries out the reaction (3S)-hydroxydecanoyl-CoA + NAD(+) = 3-oxodecanoyl-CoA + NADH + H(+). The catalysed reaction is (3E)-decenoyl-CoA = (2E)-decenoyl-CoA. It catalyses the reaction (3Z)-hexenoyl-CoA = (2E)-hexenoyl-CoA. The enzyme catalyses (3E)-hexenoyl-CoA = (2E)-hexenoyl-CoA. It carries out the reaction (3S)-hydroxydecanoyl-CoA = (2E)-decenoyl-CoA + H2O. The catalysed reaction is (3S)-hydroxyhexanoyl-CoA = (2E)-hexenoyl-CoA + H2O. Its pathway is lipid metabolism; fatty acid beta-oxidation. Enzyme activity enhanced by acetylation. Its function is as follows. Peroxisomal trifunctional enzyme possessing 2-enoyl-CoA hydratase, 3-hydroxyacyl-CoA dehydrogenase, and delta 3, delta 2-enoyl-CoA isomerase activities. Catalyzes two of the four reactions of the long chain fatty acids peroxisomal beta-oxidation pathway. Can also use branched-chain fatty acids such as 2-methyl-2E-butenoyl-CoA as a substrate, which is hydrated into (2S,3S)-3-hydroxy-2-methylbutanoyl-CoA. Optimal isomerase for 2,5 double bonds into 3,5 form isomerization in a range of enoyl-CoA species. Also able to isomerize both 3-cis and 3-trans double bonds into the 2-trans form in a range of enoyl-CoA species. Regulates the amount of medium-chain dicarboxylic fatty acids which are essential regulators of all fatty acid oxidation pathways. Also involved in the degradation of long-chain dicarboxylic acids through peroxisomal beta-oxidation. In Cavia porcellus (Guinea pig), this protein is Peroxisomal bifunctional enzyme (EHHADH).